A 122-amino-acid chain; its full sequence is Large ribosomal subunit protein uL14 (122 aa).

This sequence belongs to the universal ribosomal protein uL14 family. Part of the 50S ribosomal subunit. Forms a cluster with proteins L3 and L19. In the 70S ribosome, L14 and L19 interact and together make contacts with the 16S rRNA in bridges B5 and B8.

In terms of biological role, binds to 23S rRNA. Forms part of two intersubunit bridges in the 70S ribosome. The sequence is that of Large ribosomal subunit protein uL14 from Chlorobaculum parvum (strain DSM 263 / NCIMB 8327) (Chlorobium vibrioforme subsp. thiosulfatophilum).